Here is a 283-residue protein sequence, read N- to C-terminus: tRNA (guanine-N(1)-)-methyltransferase (283 aa).

S-adenosyl-L-methionine is bound by residues Gly-113 and 133–138 (IGDYVL).

Belongs to the RNA methyltransferase TrmD family. As to quaternary structure, homodimer.

It is found in the cytoplasm. The enzyme catalyses guanosine(37) in tRNA + S-adenosyl-L-methionine = N(1)-methylguanosine(37) in tRNA + S-adenosyl-L-homocysteine + H(+). Functionally, specifically methylates guanosine-37 in various tRNAs. In Parafrankia sp. (strain EAN1pec), this protein is tRNA (guanine-N(1)-)-methyltransferase.